The following is a 97-amino-acid chain: Co-chaperonin GroES (97 aa).

Belongs to the GroES chaperonin family. Heptamer of 7 subunits arranged in a ring. Interacts with the chaperonin GroEL.

It localises to the cytoplasm. Together with the chaperonin GroEL, plays an essential role in assisting protein folding. The GroEL-GroES system forms a nano-cage that allows encapsulation of the non-native substrate proteins and provides a physical environment optimized to promote and accelerate protein folding. GroES binds to the apical surface of the GroEL ring, thereby capping the opening of the GroEL channel. The polypeptide is Co-chaperonin GroES (Pseudomonas entomophila (strain L48)).